The chain runs to 220 residues: Translin-1 (220 aa).

The protein belongs to the translin family. In terms of assembly, forms an octameric ring-shaped structure, which is capable of binding DNA or RNA.

Its subcellular location is the cytoplasm. The protein localises to the nucleus. DNA-binding protein that specifically recognizes consensus sequences at the breakpoint junctions in chromosomal translocations. Selectively binds single-stranded d(GT)n and d(GTT)n microsatellite repeats. Has much higher affinities for the homologous RNA sequences (GU)n and (GUU)n. Does not bind double-stranded DNA. Has a role in meiosis. This Schizosaccharomyces pombe (strain 972 / ATCC 24843) (Fission yeast) protein is Translin-1 (tsn1).